The chain runs to 305 residues: PI protein (305 aa).

It belongs to the initiator RepB protein family. As to quaternary structure, homodimer.

In terms of biological role, initiation for plasmid R6K DNA replication. This chain is PI protein (pir), found in Escherichia coli.